Consider the following 205-residue polypeptide: Probable GTP-binding protein EngB (205 aa).

One can recognise an EngB-type G domain in the interval 27-201 (EGMEIAFAGR…AAKLDSWFSS (175 aa)). GTP-binding positions include 35–42 (GRSNAGKS), 62–66 (GRTQL), 80–83 (DLPG), 147–150 (TKAD), and 180–182 (FSA). Mg(2+) contacts are provided by S42 and T64.

This sequence belongs to the TRAFAC class TrmE-Era-EngA-EngB-Septin-like GTPase superfamily. EngB GTPase family. Requires Mg(2+) as cofactor.

In terms of biological role, necessary for normal cell division and for the maintenance of normal septation. This chain is Probable GTP-binding protein EngB, found in Mannheimia succiniciproducens (strain KCTC 0769BP / MBEL55E).